Reading from the N-terminus, the 122-residue chain is MAEMTVELVAVEQRLWSGSATLVSAQTTEGEIGIMPGHEPVLGQLIEGGTVSITPVDGERIVAAVHGGFLSVTATTVTILAESADMAQDIDVEAAKAVLAENSGDLEAIAVAKGQLRAVERA.

Belongs to the ATPase epsilon chain family. As to quaternary structure, F-type ATPases have 2 components, CF(1) - the catalytic core - and CF(0) - the membrane proton channel. CF(1) has five subunits: alpha(3), beta(3), gamma(1), delta(1), epsilon(1). CF(0) has three main subunits: a, b and c.

The protein resides in the cell membrane. Functionally, produces ATP from ADP in the presence of a proton gradient across the membrane. The sequence is that of ATP synthase epsilon chain from Rhodococcus erythropolis (strain PR4 / NBRC 100887).